A 418-amino-acid polypeptide reads, in one-letter code: NADH-quinone oxidoreductase subunit H (418 aa).

Helical transmembrane passes span L15 to I35, F83 to I103, L123 to L143, V164 to S184, V197 to E217, L262 to G282, W287 to L307, G321 to I341, and Y349 to L369. Residues A394–E418 form a disordered region.

The protein belongs to the complex I subunit 1 family. As to quaternary structure, NDH-1 is composed of 14 different subunits. Subunits NuoA, H, J, K, L, M, N constitute the membrane sector of the complex.

Its subcellular location is the cell membrane. It catalyses the reaction a quinone + NADH + 5 H(+)(in) = a quinol + NAD(+) + 4 H(+)(out). NDH-1 shuttles electrons from NADH, via FMN and iron-sulfur (Fe-S) centers, to quinones in the respiratory chain. The immediate electron acceptor for the enzyme in this species is believed to be menaquinone. Couples the redox reaction to proton translocation (for every two electrons transferred, four hydrogen ions are translocated across the cytoplasmic membrane), and thus conserves the redox energy in a proton gradient. This subunit may bind ubiquinone. In Mycobacterium avium (strain 104), this protein is NADH-quinone oxidoreductase subunit H.